We begin with the raw amino-acid sequence, 172 residues long: Cell division protein SepF (172 aa).

The disordered stretch occupies residues 18–73; the sequence is RRYDEEDLPDEELTTEVYSDDGYEPSSEVTQLHHHDSNEQHARGHKAVQHRRRSEL. Residues 22-40 show a composition bias toward acidic residues; that stretch reads EEDLPDEELTTEVYSDDGY. Residues 48 to 59 show a composition bias toward basic and acidic residues; the sequence is QLHHHDSNEQHA. Over residues 60-70 the composition is skewed to basic residues; the sequence is RGHKAVQHRRR.

It belongs to the SepF family. In terms of assembly, homodimer. Interacts with FtsZ.

It is found in the cytoplasm. Functionally, cell division protein that is part of the divisome complex and is recruited early to the Z-ring. Probably stimulates Z-ring formation, perhaps through the cross-linking of FtsZ protofilaments. Its function overlaps with FtsA. The sequence is that of Cell division protein SepF from Cutibacterium acnes (strain DSM 16379 / KPA171202) (Propionibacterium acnes).